Reading from the N-terminus, the 340-residue chain is L-threonine 3-dehydrogenase (340 aa).

Zn(2+) is bound at residue C38. Active-site charge relay system residues include T40 and H43. Zn(2+)-binding residues include H63, E64, C93, C96, C99, and C107. NAD(+) is bound by residues I175, D195, R200, 262-264 (LGI), and 286-287 (IY).

It belongs to the zinc-containing alcohol dehydrogenase family. As to quaternary structure, homotetramer. Zn(2+) serves as cofactor.

It localises to the cytoplasm. It carries out the reaction L-threonine + NAD(+) = (2S)-2-amino-3-oxobutanoate + NADH + H(+). It functions in the pathway amino-acid degradation; L-threonine degradation via oxydo-reductase pathway; glycine from L-threonine: step 1/2. Catalyzes the NAD(+)-dependent oxidation of L-threonine to 2-amino-3-ketobutyrate. The sequence is that of L-threonine 3-dehydrogenase from Legionella pneumophila (strain Corby).